A 314-amino-acid chain; its full sequence is MTTILDNFQRAEKIGEGTYGIVYKARSNSTGQDVALKKIRLEGETEGVPSTAIREISLLKNLKHPNVVQLFDVVISGNNLYMIFEYLNMDLKKLMDKKKDVFTPQLIKSYMHQILDAVGFCHTNRILHRDLKPQNLLVDTAGKIKLADFGLARAFNVPMRAYTHEVVTLWYRAPEILLGTKFYSTGVDIWSLGCIFSEMIMRRSLFPGDSEIDQLYRIFRTLSTPDETNWPGVTQLPDFKTKFPRWEGTNMPQPITEHEAHELIMSMLCYDPNLRISAKDALQHAYFRNVQHVDHVALPVDPNAGSASRLTRLV.

One can recognise a Protein kinase domain in the interval 8–287; sequence FQRAEKIGEG…AKDALQHAYF (280 aa). Residues 14-22 and Lys-37 contribute to the ATP site; that span reads IGEGTYGIV. Thr-18 carries the phosphothreonine modification. Tyr-19 carries the post-translational modification Phosphotyrosine. The active-site Proton acceptor is Asp-130. Tyr-162 carries the phosphotyrosine modification. Thr-163 is subject to Phosphothreonine.

It belongs to the protein kinase superfamily. CMGC Ser/Thr protein kinase family. CDC2/CDKX subfamily. In terms of assembly, interacts with cyclin CycG.

It carries out the reaction L-seryl-[protein] + ATP = O-phospho-L-seryl-[protein] + ADP + H(+). It catalyses the reaction L-threonyl-[protein] + ATP = O-phospho-L-threonyl-[protein] + ADP + H(+). The catalysed reaction is [DNA-directed RNA polymerase] + ATP = phospho-[DNA-directed RNA polymerase] + ADP + H(+). Its function is as follows. Like Cdk1, could play a key role in the control of the eukaryotic cell cycle. This chain is Cyclin-dependent kinase 2, found in Drosophila melanogaster (Fruit fly).